The following is a 359-amino-acid chain: 24-methylenesterol C-methyltransferase 3 (359 aa).

A helical transmembrane segment spans residues 4–24 (VALYCTAGLIAGAVYWFICVL).

This sequence belongs to the class I-like SAM-binding methyltransferase superfamily. Erg6/SMT family.

Its subcellular location is the membrane. It catalyses the reaction 24-methylidenelophenol + S-adenosyl-L-methionine = (Z)-24-ethylidenelophenol + S-adenosyl-L-homocysteine + H(+). It functions in the pathway steroid biosynthesis; sterol biosynthesis. Its function is as follows. Catalyzes the methyl transfer from S-adenosyl-methionine to the methylene group of 24-methylene lophenol to form 24-ethylidene lophenol. This chain is 24-methylenesterol C-methyltransferase 3 (SMT3), found in Arabidopsis thaliana (Mouse-ear cress).